A 506-amino-acid chain; its full sequence is Maturase K (506 aa).

This sequence belongs to the intron maturase 2 family. MatK subfamily.

The protein localises to the plastid. The protein resides in the chloroplast. In terms of biological role, usually encoded in the trnK tRNA gene intron. Probably assists in splicing its own and other chloroplast group II introns. This chain is Maturase K, found in Phyllodoce empetriformis (Pink mountainheath).